The following is a 583-amino-acid chain: Mitogen-activated protein kinase 4 (583 aa).

The Protein kinase domain maps to phenylalanine 20–methionine 312. Residues leucine 26 to valine 34 and lysine 49 each bind ATP. Catalysis depends on aspartate 149, which acts as the Proton acceptor. Serine 186 bears the Phosphoserine; by PAK1, PAK2 and PAK3 mark. The SEG motif signature appears at serine 186–glycine 188. Positions phenylalanine 328–glutamate 333 match the FRIEDE motif motif. Composition is skewed to basic and acidic residues over residues aspartate 366–arginine 379 and valine 391–serine 410. The tract at residues aspartate 366–serine 410 is disordered. Serine 430 carries the phosphoserine modification. The disordered stretch occupies residues serine 495 to proline 531.

Belongs to the protein kinase superfamily. CMGC Ser/Thr protein kinase family. MAP kinase subfamily. As to quaternary structure, homodimer. Heterodimer with ERK3/MAPK6. Interacts with (via FRIEDE motif) MAPKAPK5. Mg(2+) serves as cofactor. In terms of processing, phosphorylated at Ser-186 by PAK1, PAK2 and PAK3 resulting in catalytic activation. Phosphorylated by MAPKAPK5 at other sites.

It localises to the cytoplasm. The protein localises to the nucleus. It carries out the reaction L-seryl-[protein] + ATP = O-phospho-L-seryl-[protein] + ADP + H(+). It catalyses the reaction L-threonyl-[protein] + ATP = O-phospho-L-threonyl-[protein] + ADP + H(+). Its activity is regulated as follows. Activated by phosphorylation at Ser-186. Atypical MAPK protein. Phosphorylates microtubule-associated protein 2 (MAP2) and MAPKAPK5. The precise role of the complex formed with MAPKAPK5 is still unclear, but the complex follows a complex set of phosphorylation events: upon interaction with atypical MAPKAPK5, ERK4/MAPK4 is phosphorylated at Ser-186 and then mediates phosphorylation and activation of MAPKAPK5, which in turn phosphorylates ERK4/MAPK4. May promote entry in the cell cycle. The sequence is that of Mitogen-activated protein kinase 4 (Mapk4) from Mus musculus (Mouse).